We begin with the raw amino-acid sequence, 197 residues long: NADH-quinone oxidoreductase subunit C (197 aa).

It belongs to the complex I 30 kDa subunit family. In terms of assembly, NDH-1 is composed of 14 different subunits. Subunits NuoB, C, D, E, F, and G constitute the peripheral sector of the complex.

It localises to the cell inner membrane. It carries out the reaction a quinone + NADH + 5 H(+)(in) = a quinol + NAD(+) + 4 H(+)(out). Its function is as follows. NDH-1 shuttles electrons from NADH, via FMN and iron-sulfur (Fe-S) centers, to quinones in the respiratory chain. The immediate electron acceptor for the enzyme in this species is believed to be ubiquinone. Couples the redox reaction to proton translocation (for every two electrons transferred, four hydrogen ions are translocated across the cytoplasmic membrane), and thus conserves the redox energy in a proton gradient. This Neisseria meningitidis serogroup A / serotype 4A (strain DSM 15465 / Z2491) protein is NADH-quinone oxidoreductase subunit C.